The sequence spans 399 residues: Na(+)/H(+) antiporter NhaA (399 aa).

The next 11 membrane-spanning stretches (helical) occupy residues 14-34, 59-79, 95-115, 124-144, 154-174, 177-197, 213-233, 261-281, 290-310, 331-351, and 363-383; these read AGGILLMIAVALAMIMANSPL, LIHWINDGLMALFFMLIGLEV, SLPTFAAVGGMVFPAGIYLLF, AGWAIPAATDIAFALGVMALL, VFLLALAIIDDLGVVVIIAMF, TDLSMLSLIVAGIAILGLVGL, LILWIAVLKSGVHATLAGVII, FIILPIFAFANAGVDLSPMSF, VGIALGLLLGKPLGVLVFSYI, VALMCGIGFTMSMFISSLAFV, and LGILVGSFASAIIGYFWLAKV.

This sequence belongs to the NhaA Na(+)/H(+) (TC 2.A.33) antiporter family.

Its subcellular location is the cell inner membrane. It catalyses the reaction Na(+)(in) + 2 H(+)(out) = Na(+)(out) + 2 H(+)(in). In terms of biological role, na(+)/H(+) antiporter that extrudes sodium in exchange for external protons. This is Na(+)/H(+) antiporter NhaA from Shewanella sediminis (strain HAW-EB3).